A 380-amino-acid chain; its full sequence is Histidinol-phosphate aminotransferase (380 aa).

Lysine 235 carries the N6-(pyridoxal phosphate)lysine modification.

The protein belongs to the class-II pyridoxal-phosphate-dependent aminotransferase family. Histidinol-phosphate aminotransferase subfamily. Homodimer. Pyridoxal 5'-phosphate serves as cofactor.

The catalysed reaction is L-histidinol phosphate + 2-oxoglutarate = 3-(imidazol-4-yl)-2-oxopropyl phosphate + L-glutamate. The protein operates within amino-acid biosynthesis; L-histidine biosynthesis; L-histidine from 5-phospho-alpha-D-ribose 1-diphosphate: step 7/9. The chain is Histidinol-phosphate aminotransferase from Rhodococcus jostii (strain RHA1).